The chain runs to 512 residues: Phospho-2-dehydro-3-deoxyheptonate aldolase 2, chloroplastic (512 aa).

The N-terminal 57 residues, 1 to 57 (MALTATATTRGGSALPNSCLQTPKFQSLQKPTFISSFPTNKKTKPRTKHISAVQSPP), are a transit peptide targeting the chloroplast. The disordered stretch occupies residues 37–57 (FPTNKKTKPRTKHISAVQSPP). A Mn(2+)-binding site is contributed by cysteine 126. Substrate contacts are provided by residues arginine 165, 324 to 325 (ER), lysine 347, and arginine 378. Residues histidine 410, glutamate 452, and aspartate 482 each contribute to the Mn(2+) site.

Belongs to the class-II DAHP synthase family. In terms of assembly, homodimer. Mn(2+) serves as cofactor. Mostly expressed in leaves and stems, and, to a lower extent, in roots, stigmas, anthers, petal tubes, petal limbs and sepals.

The protein resides in the plastid. It localises to the chloroplast. The enzyme catalyses D-erythrose 4-phosphate + phosphoenolpyruvate + H2O = 7-phospho-2-dehydro-3-deoxy-D-arabino-heptonate + phosphate. The protein operates within metabolic intermediate biosynthesis; chorismate biosynthesis; chorismate from D-erythrose 4-phosphate and phosphoenolpyruvate: step 1/7. Its function is as follows. Involved in the production of volatile organic compounds (VOCs). Catalyzes an aldol-like condensation reaction between phosphoenolpyruvate (PEP) and D-erythrose 4-phosphate (E4P) to generate 3-deoxy-D-arabino-heptulosonate 7-phosphate (DAH7P) and inorganic phosphate. The protein is Phospho-2-dehydro-3-deoxyheptonate aldolase 2, chloroplastic of Petunia hybrida (Petunia).